A 367-amino-acid polypeptide reads, in one-letter code: Phosphoglycerate kinase (367 aa).

The (2R)-3-phosphoglycerate site is built by Val-1, Asp-2, Phe-3, Asn-4, Arg-17, Ser-40, His-41, Gly-43, Arg-44, Leu-98, Arg-99, His-146, and Arg-147. An ADP-binding site is contributed by Gly-190. CDP is bound at residue Gly-190. Ala-191 and Lys-192 together coordinate AMP. Ala-191 serves as a coordination point for ATP. Ala-191 contributes to the Mg(2+) binding site. Mg(2+)-binding residues include Ala-194 and Asp-195. Asp-195 contacts CDP. Residue Lys-196 participates in AMP binding. Lys-196 serves as a coordination point for ATP. Gly-214 contributes to the ADP binding site. Residue Gly-214 participates in CDP binding. The AMP site is built by Gly-215 and Gly-289. Gly-215 and Gly-289 together coordinate ATP. CDP-binding residues include Gly-314 and Phe-319. Phe-319 lines the ADP pocket. Glu-320 serves as a coordination point for AMP. Positions 320, 351, and 352 each coordinate ATP. Residue Asp-351 coordinates Mg(2+).

This sequence belongs to the phosphoglycerate kinase family. In terms of assembly, monomer. The cofactor is Mg(2+).

The enzyme catalyses (2R)-3-phosphoglycerate + ATP = (2R)-3-phospho-glyceroyl phosphate + ADP. Its pathway is carbohydrate degradation; glycolysis; pyruvate from D-glyceraldehyde 3-phosphate: step 2/5. The sequence is that of Phosphoglycerate kinase (PGK) from Paramecium primaurelia.